Reading from the N-terminus, the 542-residue chain is CTP synthase (542 aa).

Positions Met1–Leu265 are amidoligase domain. Ser13 is a CTP binding site. Ser13 provides a ligand contact to UTP. Residues Ser14–Ile19 and Asp71 each bind ATP. Mg(2+) contacts are provided by Asp71 and Glu139. CTP contacts are provided by residues Asp146 to Glu148, Lys186 to Gln191, and Lys222. Residues Lys186–Gln191 and Lys222 each bind UTP. Residues Val290–Glu541 enclose the Glutamine amidotransferase type-1 domain. Gly352 is a binding site for L-glutamine. Cys379 acts as the Nucleophile; for glutamine hydrolysis in catalysis. Residues Leu380–Gln383, Glu403, and Arg471 each bind L-glutamine. Catalysis depends on residues His514 and Glu516.

Belongs to the CTP synthase family. Homotetramer.

It carries out the reaction UTP + L-glutamine + ATP + H2O = CTP + L-glutamate + ADP + phosphate + 2 H(+). The catalysed reaction is L-glutamine + H2O = L-glutamate + NH4(+). The enzyme catalyses UTP + NH4(+) + ATP = CTP + ADP + phosphate + 2 H(+). It functions in the pathway pyrimidine metabolism; CTP biosynthesis via de novo pathway; CTP from UDP: step 2/2. With respect to regulation, allosterically activated by GTP, when glutamine is the substrate; GTP has no effect on the reaction when ammonia is the substrate. The allosteric effector GTP functions by stabilizing the protein conformation that binds the tetrahedral intermediate(s) formed during glutamine hydrolysis. Inhibited by the product CTP, via allosteric rather than competitive inhibition. Catalyzes the ATP-dependent amination of UTP to CTP with either L-glutamine or ammonia as the source of nitrogen. Regulates intracellular CTP levels through interactions with the four ribonucleotide triphosphates. In Sulfurimonas denitrificans (strain ATCC 33889 / DSM 1251) (Thiomicrospira denitrificans (strain ATCC 33889 / DSM 1251)), this protein is CTP synthase.